The primary structure comprises 205 residues: Holliday junction branch migration complex subunit RuvA (205 aa).

The interval 1 to 62 is domain I; that stretch reads MFEYVTGYVE…EDIMALYGFK (62 aa). The segment at 63–141 is domain II; that stretch reads TREERLLFTK…DVVPDAFVDL (79 aa). Residues 142-152 are flexible linker; it reads FSDTESFDTKK. The tract at residues 153–205 is domain III; sequence GSSVELDEALEALRALGYAEREVSRVVPELLKESLTTDQYIKKALSLLLNGKR.

The protein belongs to the RuvA family. Homotetramer. Forms an RuvA(8)-RuvB(12)-Holliday junction (HJ) complex. HJ DNA is sandwiched between 2 RuvA tetramers; dsDNA enters through RuvA and exits via RuvB. An RuvB hexamer assembles on each DNA strand where it exits the tetramer. Each RuvB hexamer is contacted by two RuvA subunits (via domain III) on 2 adjacent RuvB subunits; this complex drives branch migration. In the full resolvosome a probable DNA-RuvA(4)-RuvB(12)-RuvC(2) complex forms which resolves the HJ.

It is found in the cytoplasm. The RuvA-RuvB-RuvC complex processes Holliday junction (HJ) DNA during genetic recombination and DNA repair, while the RuvA-RuvB complex plays an important role in the rescue of blocked DNA replication forks via replication fork reversal (RFR). RuvA specifically binds to HJ cruciform DNA, conferring on it an open structure. The RuvB hexamer acts as an ATP-dependent pump, pulling dsDNA into and through the RuvAB complex. HJ branch migration allows RuvC to scan DNA until it finds its consensus sequence, where it cleaves and resolves the cruciform DNA. This chain is Holliday junction branch migration complex subunit RuvA, found in Bacillus mycoides (strain KBAB4) (Bacillus weihenstephanensis).